We begin with the raw amino-acid sequence, 1261 residues long: Structural maintenance of chromosomes protein 3 (1261 aa).

Coiled-coil stretches lie at residues 188–332 (EKIQ…HSLQ) and 406–450 (LIAD…YEMD). The region spanning 534 to 645 (NGYYGTVIEL…IIVRTLDQAA (112 aa)) is the SMC hinge domain. Coiled-coil stretches lie at residues 677-826 (KRSK…MDLM), 857-930 (NERR…DKIT), and 1023-1085 (RELE…ENRK). A DA-box motif is present at residues 1159 to 1193 (LSGGQKSLVALAIIFSIQKCDPAPFYLFDEIDAAL).

This sequence belongs to the SMC family. SMC3 subfamily. In terms of assembly, component of the cohesin complex, composed of the smc-1 and smc-3 heterodimer attached via their SMC hinge domain, scc-1 which links them, and scc-3. Interacts with scc-1, smc-1 and tim-1.

It is found in the nucleus. The protein localises to the chromosome. Functionally, involved in chromosome cohesion during cell cycle and in DNA repair. Involved in the repair of double strand breaks during mitosis and meiosis. Required for chromosome segregation during mitosis. Central component of cohesin complex. The cohesin complex is required for the cohesion of sister chromatids after DNA replication. The cohesin complex apparently forms a large proteinaceous ring within which sister chromatids can be trapped. At anaphase, the complex is cleaved and dissociates from chromatin, allowing sister chromatids to segregate. Required for the localization of lab-1 to meiotic and mitotic chromosomes. This Caenorhabditis elegans protein is Structural maintenance of chromosomes protein 3.